The sequence spans 360 residues: Photosystem II protein D1 (360 aa).

Helical transmembrane passes span 29–46 (YIGWFGVVMIPTLLTATS), 118–133 (HFLLGVCCYIGREWEL), and 142–156 (WISVAFTAPVAAAAA). Residue His118 participates in chlorophyll a binding. Tyr126 lines the pheophytin a pocket. [CaMn4O5] cluster is bound by residues Asp170 and Glu189. A helical transmembrane segment spans residues 197 to 218 (FHQLGVAGVFGGSLFSAMHGSL). A chlorophyll a-binding site is contributed by His198. Residues His215 and 264–265 (SF) each bind a quinone. Fe cation is bound at residue His215. His272 lines the Fe cation pocket. The chain crosses the membrane as a helical span at residues 274-288 (FLGAWPVVGIWLTSM). Positions 332, 333, 342, and 344 each coordinate [CaMn4O5] cluster. The propeptide occupies 345 to 360 (SGDSCPVALVAPSING).

Belongs to the reaction center PufL/M/PsbA/D family. As to quaternary structure, PSII is composed of 1 copy each of membrane proteins PsbA, PsbB, PsbC, PsbD, PsbE, PsbF, PsbH, PsbI, PsbJ, PsbK, PsbL, PsbM, PsbT, PsbX, PsbY, PsbZ, Psb30/Ycf12, at least 3 peripheral proteins of the oxygen-evolving complex and a large number of cofactors. It forms dimeric complexes. The D1/D2 heterodimer binds P680, chlorophylls that are the primary electron donor of PSII, and subsequent electron acceptors. It shares a non-heme iron and each subunit binds pheophytin, quinone, additional chlorophylls, carotenoids and lipids. D1 provides most of the ligands for the Mn4-Ca-O5 cluster of the oxygen-evolving complex (OEC). There is also a Cl(-1) ion associated with D1 and D2, which is required for oxygen evolution. The PSII complex binds additional chlorophylls, carotenoids and specific lipids. serves as cofactor. Tyr-161 forms a radical intermediate that is referred to as redox-active TyrZ, YZ or Y-Z. In terms of processing, C-terminally processed by CTPA; processing is essential to allow assembly of the oxygen-evolving complex and thus photosynthetic growth.

It is found in the plastid. The protein resides in the chloroplast thylakoid membrane. The enzyme catalyses 2 a plastoquinone + 4 hnu + 2 H2O = 2 a plastoquinol + O2. Functionally, photosystem II (PSII) is a light-driven water:plastoquinone oxidoreductase that uses light energy to abstract electrons from H(2)O, generating O(2) and a proton gradient subsequently used for ATP formation. It consists of a core antenna complex that captures photons, and an electron transfer chain that converts photonic excitation into a charge separation. The D1/D2 (PsbA/PsbD) reaction center heterodimer binds P680, the primary electron donor of PSII as well as several subsequent electron acceptors. The chain is Photosystem II protein D1 from Palmaria palmata (Dulse).